We begin with the raw amino-acid sequence, 255 residues long: MNFDLSKISCLTIIGGENDPINRKLFSGSNKISTNYYDLTIFFVERAKKIHGSKYNYDNTFYVNMTSLITVECNKCLDIFNVIANDHLYSVKGECPCRYNDSIKNDDDFHCTINKIFDIYSSEFECSTYISHNKQQKIRMRCLKCNHSAFLAPAELLGICYQCDKCSKKIITVDEFISKSKNIFGDIFDYSKVVDVRSSAKVKLVCNVCGEDVLQISKNHLKGKLPYHFIKMPDIRHRNIRAKRSAKTKISKRIS.

This is an uncharacterized protein from Acanthamoeba polyphaga mimivirus (APMV).